The following is a 1069-amino-acid chain: Degenerin-like protein del-10 (1069 aa).

Topologically, residues 1–95 (MVRMAERLAE…LNAASPVTRG (95 aa)) are cytoplasmic. Residues 96-116 (LWCMIIIAFVILVLVQCYSQI) form a helical membrane-spanning segment. Over 117–830 (KLYISEPVAT…FWSLACDIGG (714 aa)) the chain is Extracellular. Residues asparagine 216, asparagine 290, asparagine 374, asparagine 454, asparagine 539, asparagine 545, and asparagine 584 are each glycosylated (N-linked (GlcNAc...) asparagine). Residues 831–851 (ALGLFLGASLLTIIEIVYLCI) traverse the membrane as a helical segment. Topologically, residues 852–1069 (QYGLCGKRAR…EEDDDKHSYV (218 aa)) are cytoplasmic. 2 disordered regions span residues 898–948 (KKSQ…TLTP) and 960–1069 (RNSQ…HSYV). Basic and acidic residues predominate over residues 915 to 928 (GDKFRSRASSEESK). Polar residues predominate over residues 938-948 (NDPSGNSTLTP). Over residues 967–978 (YHDDHHPEDHYY) the composition is skewed to basic and acidic residues.

Belongs to the amiloride-sensitive sodium channel (TC 1.A.6) family.

The protein localises to the membrane. The protein is Degenerin-like protein del-10 of Caenorhabditis elegans.